The following is a 1918-amino-acid chain: Diacylglycerol kinase eta (1918 aa).

Positions 1–10 (MAHLKLDTLH) are enriched in basic and acidic residues. The interval 1 to 37 (MAHLKLDTLHVQRSPRGSRRSSPSSGRSSACSSGSIS) is disordered. Positions 20–37 (RSSPSSGRSSACSSGSIS) are enriched in low complexity. Residues 82–175 (AIIKEGFLLK…WLGGLKTATA (94 aa)) form the PH domain. 2 consecutive Phorbol-ester/DAG-type zinc fingers follow at residues 195 to 245 (HHHW…IANC) and 268 to 319 (PHQW…AVAC). In terms of domain architecture, DAGKc spans 350-486 (GNFSPLLVFV…DRWSIMVFEK (137 aa)). Disordered regions lie at residues 783-805 (GANIDDAGNRLSPCSDGGENTPT), 1017-1067 (TTLC…DDNP), 1177-1212 (PNTILTTSTSPTKKSGHGQDISVVVRPPTPLRGDSI), and 1380-1399 (ERDKEERGGKDKDKTPTEEA). The span at 1177–1189 (PNTILTTSTSPTK) shows a compositional bias: polar residues. Residues 1855–1918 (WSVNEVVTWL…LQAIKDLSEN (64 aa)) form the SAM domain.

It belongs to the eukaryotic diacylglycerol kinase family.

Its subcellular location is the cytoplasm. It carries out the reaction a 1,2-diacyl-sn-glycerol + ATP = a 1,2-diacyl-sn-glycero-3-phosphate + ADP + H(+). Functionally, phosphorylates diacylglycerol (DAG) to generate phosphatidic acid (PA). In Drosophila erecta (Fruit fly), this protein is Diacylglycerol kinase eta.